The chain runs to 172 residues: NAD(P)H-quinone oxidoreductase subunit I, chloroplastic (172 aa).

4Fe-4S ferredoxin-type domains are found at residues 55 to 84 (GRIH…VDWK) and 95 to 124 (LNYS…MTEE). Residues C64, C67, C70, C74, C104, C107, C110, and C114 each coordinate [4Fe-4S] cluster.

The protein belongs to the complex I 23 kDa subunit family. In terms of assembly, NDH is composed of at least 16 different subunits, 5 of which are encoded in the nucleus. It depends on [4Fe-4S] cluster as a cofactor.

The protein resides in the plastid. It is found in the chloroplast thylakoid membrane. The enzyme catalyses a plastoquinone + NADH + (n+1) H(+)(in) = a plastoquinol + NAD(+) + n H(+)(out). It catalyses the reaction a plastoquinone + NADPH + (n+1) H(+)(in) = a plastoquinol + NADP(+) + n H(+)(out). Its function is as follows. NDH shuttles electrons from NAD(P)H:plastoquinone, via FMN and iron-sulfur (Fe-S) centers, to quinones in the photosynthetic chain and possibly in a chloroplast respiratory chain. The immediate electron acceptor for the enzyme in this species is believed to be plastoquinone. Couples the redox reaction to proton translocation, and thus conserves the redox energy in a proton gradient. The sequence is that of NAD(P)H-quinone oxidoreductase subunit I, chloroplastic from Arabidopsis thaliana (Mouse-ear cress).